We begin with the raw amino-acid sequence, 159 residues long: uncharacterized protein (159 aa).

Transmembrane regions (helical) follow at residues 16–36, 84–104, and 112–132; these read IVLP…AFIF, VYAG…LLII, and VFFY…LLPV.

The protein resides in the cell membrane. This is an uncharacterized protein from Bacillus subtilis (strain 168).